The following is a 263-amino-acid chain: Tropinone reductase homolog At2g29300 (263 aa).

Position 13–37 (Leu13–His37) interacts with NADP(+). Ser146 is a binding site for substrate. The active-site Proton acceptor is the Tyr160.

Belongs to the short-chain dehydrogenases/reductases (SDR) family. SDR65C subfamily.

This Arabidopsis thaliana (Mouse-ear cress) protein is Tropinone reductase homolog At2g29300.